A 257-amino-acid chain; its full sequence is tRNA pseudouridine synthase A (257 aa).

The active-site Nucleophile is the Asp53. Tyr111 is a substrate binding site.

This sequence belongs to the tRNA pseudouridine synthase TruA family. In terms of assembly, homodimer.

The enzyme catalyses uridine(38/39/40) in tRNA = pseudouridine(38/39/40) in tRNA. Formation of pseudouridine at positions 38, 39 and 40 in the anticodon stem and loop of transfer RNAs. The protein is tRNA pseudouridine synthase A of Xanthomonas axonopodis pv. citri (strain 306).